Here is an 86-residue protein sequence, read N- to C-terminus: MANIKSQIKRIRTNEKARQRNKAYKSELKTHVRKVREAVTAGDKETASDALQVASRKLDKAVSKGVIHKNQAANRKSALAKQVSGL.

Residues 1–25 (MANIKSQIKRIRTNEKARQRNKAYK) are disordered. Positions 12–25 (RTNEKARQRNKAYK) are enriched in basic and acidic residues.

It belongs to the bacterial ribosomal protein bS20 family.

Its function is as follows. Binds directly to 16S ribosomal RNA. This chain is Small ribosomal subunit protein bS20, found in Beutenbergia cavernae (strain ATCC BAA-8 / DSM 12333 / CCUG 43141 / JCM 11478 / NBRC 16432 / NCIMB 13614 / HKI 0122).